A 628-amino-acid chain; its full sequence is Chaperone protein HtpG (628 aa).

The interval 1–333 is a; substrate-binding; the sequence is MTTDTKATET…SADLPLNVSR (333 aa). Residues 334–549 are b; the sequence is EMIQESPLLA…EHGPDRQFER (216 aa). A c region spans residues 550 to 628; the sequence is LMNAAGRLDK…RLIARGIAKG (79 aa).

The protein belongs to the heat shock protein 90 family. Homodimer.

It is found in the cytoplasm. Molecular chaperone. Has ATPase activity. In Mesorhizobium japonicum (strain LMG 29417 / CECT 9101 / MAFF 303099) (Mesorhizobium loti (strain MAFF 303099)), this protein is Chaperone protein HtpG.